The following is a 147-amino-acid chain: Antiholin-like protein LrgA (147 aa).

4 helical membrane-spanning segments follow: residues 12 to 32 (PAHFFHQVIVIALVLFVSKII), 35 to 55 (FMPIPMPASVIGLVLLFVLLC), 74 to 94 (NIGLLFVPAGISVVNSLGVIS), and 98 to 118 (FLIIGLIIVSTILLLICTGYV).

It belongs to the CidA/LrgA family. LrgA subfamily.

The protein localises to the cell membrane. In terms of biological role, inhibits the expression or activity of extracellular murein hydrolases by interacting, possibly with LrgB, with the holin-like proteins CidA and/or CidB. The LrgAB and CidAB proteins may affect the proton motive force of the membrane. May be involved in programmed cell death (PCD), possibly triggering PCD in response to antibiotics and environmental stresses. This is Antiholin-like protein LrgA from Staphylococcus aureus (strain USA300).